Here is a 697-residue protein sequence, read N- to C-terminus: Elongation factor G 2 (697 aa).

The tr-type G domain maps to Ser-5–Asn-280. GTP is bound by residues Ala-14–Thr-21, Asp-78–His-82, and Asn-132–Asp-135.

Belongs to the TRAFAC class translation factor GTPase superfamily. Classic translation factor GTPase family. EF-G/EF-2 subfamily.

Its subcellular location is the cytoplasm. Functionally, catalyzes the GTP-dependent ribosomal translocation step during translation elongation. During this step, the ribosome changes from the pre-translocational (PRE) to the post-translocational (POST) state as the newly formed A-site-bound peptidyl-tRNA and P-site-bound deacylated tRNA move to the P and E sites, respectively. Catalyzes the coordinated movement of the two tRNA molecules, the mRNA and conformational changes in the ribosome. The chain is Elongation factor G 2 from Shewanella sp. (strain MR-4).